The sequence spans 321 residues: Glucokinase (321 aa).

8 to 13 (GDVGGT) contacts ATP.

This sequence belongs to the bacterial glucokinase family.

It is found in the cytoplasm. It carries out the reaction D-glucose + ATP = D-glucose 6-phosphate + ADP + H(+). The sequence is that of Glucokinase from Cronobacter sakazakii (strain ATCC BAA-894) (Enterobacter sakazakii).